The sequence spans 239 residues: Small ribosomal subunit protein uS2 (239 aa).

This sequence belongs to the universal ribosomal protein uS2 family.

This is Small ribosomal subunit protein uS2 from Francisella tularensis subsp. novicida (strain U112).